The sequence spans 101 residues: MTRPLEQAVAAIVCTFQEYAGRCGDKYKICQSELKELLQKELPTWTPSEFRECDYNKFMSVLDTNKDCEVDFGEYVRSLASLCLYCHEYFKECPPEPPCPQ.

EF-hand domains are found at residues 12-47 and 50-85; these read IVCT…TWTP and FREC…LCLY. Position 26 (K26) interacts with Ca(2+). Cysteines 30 and 68 form a disulfide. R51 is subject to Citrulline; by PAD3. The Ca(2+) site is built by D63, N65, D67, E69, and E74. 4 residues coordinate Zn(2+): C83, C86, H87, and C93.

The protein belongs to the S-100 family. In terms of assembly, homodimer and homotetramer for the citrullinated form. In terms of processing, more than half of the arginine residues undergo citrullination by PAD1 and PAD2. Arg-51 is specifically citrullinated by PAD3 and promotes tetramerization. As to expression, skin specific, specifically expressed in cuticle of pelage follicle.

The protein resides in the cytoplasm. Functionally, binds both calcium and zinc. May be involved in calcium-dependent cuticle cell differentiation, hair shaft and hair cuticular barrier formation. In Mus musculus (Mouse), this protein is Protein S100-A3 (S100a3).